The sequence spans 565 residues: DNA-binding protein scr1 (565 aa).

Residues 1-19 (MSEATTATTTGKPSRSTKN) are compositionally biased toward polar residues. Residues 1–25 (MSEATTATTTGKPSRSTKNPDAPRP) are disordered. C2H2-type zinc fingers lie at residues 26–48 (YKCP…IRTH) and 54–78 (HVCT…ARIH). 4 disordered regions span residues 79 to 119 (TNAN…VHMT), 261 to 303 (SNAP…STGS), 390 to 434 (RPVS…DDPS), and 466 to 565 (ASTP…MTKP). Positions 80 to 102 (NANSRRNAAAAAAANNSARSSNS) are enriched in low complexity. Composition is skewed to polar residues over residues 108-119 (EPSTNNAGVHMT), 276-286 (LPSSSNTSPNH), and 294-303 (GLTSNSSTGS). Over residues 391–413 (PVSPCSTAPSSPTFSTRSFSPTP) the composition is skewed to low complexity. Residues 466 to 478 (ASTPASGAVSRTP) show a composition bias toward polar residues. Composition is skewed to low complexity over residues 479 to 492 (SSVS…VNSS), 517 to 526 (FSSSSRVSVS), and 537 to 555 (SSST…PAFS).

The protein belongs to the creA/MIG C2H2-type zinc-finger protein family.

It localises to the nucleus. Involved in carbon catabolite repression. Represses the transcription of various genes including the inv1 gene. The sequence is that of DNA-binding protein scr1 (scr1) from Schizosaccharomyces pombe (strain 972 / ATCC 24843) (Fission yeast).